Here is a 223-residue protein sequence, read N- to C-terminus: MSTAAPLVFALPKGRILDEALPLLEKAGIVPEAEFFDKSSRALSFATNRPDVKIIRVRAFDVATFVAHGAAHAGIVGSDVIDEFDYADLYAPVDLDIGHCRLSVAEPVSMVESGANARESHARVATKYPNLTRRHFEKLGVQAEVVKLNGAMELAPSLGLASRIVDLVSTGRTLKENGLVETSRILPVSARLIVNRAALKTDSARLGALVDAFRAMVAAKDAA.

This sequence belongs to the ATP phosphoribosyltransferase family. Short subfamily. Heteromultimer composed of HisG and HisZ subunits.

It is found in the cytoplasm. It catalyses the reaction 1-(5-phospho-beta-D-ribosyl)-ATP + diphosphate = 5-phospho-alpha-D-ribose 1-diphosphate + ATP. Its pathway is amino-acid biosynthesis; L-histidine biosynthesis; L-histidine from 5-phospho-alpha-D-ribose 1-diphosphate: step 1/9. Its function is as follows. Catalyzes the condensation of ATP and 5-phosphoribose 1-diphosphate to form N'-(5'-phosphoribosyl)-ATP (PR-ATP). Has a crucial role in the pathway because the rate of histidine biosynthesis seems to be controlled primarily by regulation of HisG enzymatic activity. The sequence is that of ATP phosphoribosyltransferase from Novosphingobium aromaticivorans (strain ATCC 700278 / DSM 12444 / CCUG 56034 / CIP 105152 / NBRC 16084 / F199).